The following is a 180-amino-acid chain: NAD(P)H-quinone oxidoreductase subunit I, chloroplastic (180 aa).

2 consecutive 4Fe-4S ferredoxin-type domains span residues Gly-55–Arg-84 and Leu-95–Glu-124. [4Fe-4S] cluster-binding residues include Cys-64, Cys-67, Cys-70, Cys-74, Cys-104, Cys-107, Cys-110, and Cys-114.

This sequence belongs to the complex I 23 kDa subunit family. NDH is composed of at least 16 different subunits, 5 of which are encoded in the nucleus. The cofactor is [4Fe-4S] cluster.

It localises to the plastid. The protein resides in the chloroplast thylakoid membrane. The catalysed reaction is a plastoquinone + NADH + (n+1) H(+)(in) = a plastoquinol + NAD(+) + n H(+)(out). The enzyme catalyses a plastoquinone + NADPH + (n+1) H(+)(in) = a plastoquinol + NADP(+) + n H(+)(out). Functionally, NDH shuttles electrons from NAD(P)H:plastoquinone, via FMN and iron-sulfur (Fe-S) centers, to quinones in the photosynthetic chain and possibly in a chloroplast respiratory chain. The immediate electron acceptor for the enzyme in this species is believed to be plastoquinone. Couples the redox reaction to proton translocation, and thus conserves the redox energy in a proton gradient. This Dioscorea elephantipes (Elephant's foot yam) protein is NAD(P)H-quinone oxidoreductase subunit I, chloroplastic.